Reading from the N-terminus, the 489-residue chain is CBL-interacting serine/threonine-protein kinase 12 (489 aa).

One can recognise a Protein kinase domain in the interval 26 to 280 (YEMGKLLGHG…FPEIMENSWF (255 aa)). ATP-binding positions include 32–40 (LGHGTFAKV) and K55. The Proton acceptor role is filled by D148. Residues 166–195 (DFGLSAVSDQIRQDGLFHTFCGTPAYVAPE) form an activation loop region. S170 is subject to Phosphoserine. T184 carries the post-translational modification Phosphothreonine. Residues 336–360 (PRPASLNAFDIISFSQGFDLSGLFD) form the NAF domain. A PPI region spans residues 363–392 (GEGSRFVSGAPVSKIISKLEEIAKVVSFTV).

It belongs to the protein kinase superfamily. CAMK Ser/Thr protein kinase family. SNF1 subfamily. As to quaternary structure, interacts with CBL2 and CBL3. Mn(2+) is required as a cofactor. In terms of tissue distribution, expressed in roots and shoots.

The catalysed reaction is L-seryl-[protein] + ATP = O-phospho-L-seryl-[protein] + ADP + H(+). It catalyses the reaction L-threonyl-[protein] + ATP = O-phospho-L-threonyl-[protein] + ADP + H(+). Its function is as follows. CIPK serine-threonine protein kinases interact with CBL proteins. Binding of a CBL protein to the regulatory NAF domain of CIPK protein lead to the activation of the kinase in a calcium-dependent manner. The polypeptide is CBL-interacting serine/threonine-protein kinase 12 (CIPK12) (Arabidopsis thaliana (Mouse-ear cress)).